Reading from the N-terminus, the 138-residue chain is Protein FAM136A (138 aa).

This sequence belongs to the FAM136 family.

This Xenopus tropicalis (Western clawed frog) protein is Protein FAM136A (fam136a).